A 287-amino-acid chain; its full sequence is MNLLTKERGLAYVQLARIDKPIGTLLLLWPTLWALWLAADGLPDLWTLLVFVVGVFLMRSAGCVINDYADRNFDGHVKRTAGRPLPMGKVKPREVLALFAVLALISFALVLTMNPLTIGLSFAALLLAVCYPFMKRYIPIPQLVLGMAFSWSIPMAYAAQANALPAVAWLVFLANLLWTIAYDTQYAMVDRDDDLKLGLKSSAILFGRHDKRIIGALQLLTLLILLLVGQLSELGSSYYWSLLAAAALFVYQQRLIRERQREACFQAFLNNNYVGALIFAGVVINYL.

Helical transmembrane passes span 21 to 39 (PIGT…WLAA), 95 to 115 (VLAL…TMNP), 116 to 136 (LTIG…FMKR), 138 to 158 (IPIP…MAYA), 161 to 181 (ANAL…WTIA), 213 to 233 (IIGA…QLSE), 234 to 251 (LGSS…LFVY), and 264 to 284 (CFQA…GVVI).

It belongs to the UbiA prenyltransferase family. Requires Mg(2+) as cofactor.

The protein localises to the cell inner membrane. It catalyses the reaction all-trans-octaprenyl diphosphate + 4-hydroxybenzoate = 4-hydroxy-3-(all-trans-octaprenyl)benzoate + diphosphate. The protein operates within cofactor biosynthesis; ubiquinone biosynthesis. Catalyzes the prenylation of para-hydroxybenzoate (PHB) with an all-trans polyprenyl group. Mediates the second step in the final reaction sequence of ubiquinone-8 (UQ-8) biosynthesis, which is the condensation of the polyisoprenoid side chain with PHB, generating the first membrane-bound Q intermediate 3-octaprenyl-4-hydroxybenzoate. The protein is 4-hydroxybenzoate octaprenyltransferase of Aeromonas hydrophila subsp. hydrophila (strain ATCC 7966 / DSM 30187 / BCRC 13018 / CCUG 14551 / JCM 1027 / KCTC 2358 / NCIMB 9240 / NCTC 8049).